We begin with the raw amino-acid sequence, 414 residues long: Zinc metalloproteinase-disintegrin-like batroxstatin-3 (414 aa).

N-linked (GlcNAc...) asparagine glycosylation is found at N7 and N70. One can recognise a Peptidase M12B domain in the interval 10–204 (KYIKLVIVAD…HTPQCILNEP (195 aa)). 3 disulfide bridges follow: C121–C199, C161–C183, and C163–C168. A Zn(2+)-binding site is contributed by H146. The active site involves E147. Residues H150 and H156 each coordinate Zn(2+). A Disintegrin domain is found at 212-298 (PEVCGNYLLE…HCPTDRFHRN (87 aa)). Ca(2+)-binding residues include V214, N217, E221, E224, and D227. 14 cysteine pairs are disulfide-bonded: C215–C244, C226–C239, C228–C234, C238–C261, C252–C258, C257–C283, C270–C290, C277–C309, C302–C314, C321–C371, C336–C381, C349–C359, C366–C403, and C397–C408. The short motif at 276–278 (ECD) is the D/ECD-tripeptide element. Positions 278, 281, 293, and 294 each coordinate Ca(2+).

This sequence belongs to the venom metalloproteinase (M12B) family. P-III subfamily. P-IIIa sub-subfamily. As to quaternary structure, monomer. Requires Zn(2+) as cofactor. As to expression, expressed by the venom gland.

The protein resides in the secreted. Functionally, snake venom zinc metalloprotease that induces apoptosis in vascular endothelial cells (VEC), without degrading the extracellular matrix (it cannot cleave collagen) or inhibiting adhesion of VEC. Has also fibrinogenolytic and hemorrhagic activities. In Bothrops atrox (Barba amarilla), this protein is Zinc metalloproteinase-disintegrin-like batroxstatin-3.